The sequence spans 376 residues: Dehydrogenase/reductase SDR family member FEY (376 aa).

Serine 2 carries the N-acetylserine modification. 61-85 (VVTGSTSGIGRETARQLAEAGAHVV) provides a ligand contact to NAD(+). A substrate-binding site is contributed by serine 199. The active-site Proton acceptor is the tyrosine 227.

The protein belongs to the short-chain dehydrogenases/reductases (SDR) family. In terms of tissue distribution, expressed in roots, stems, leaves and flowers and, at lower levels, in siliques.

Putative oxidoreductase. Required for vegetative shoot apex development, especially during leaf positioning and for shoot apical meristem (SAM) maintenance. The sequence is that of Dehydrogenase/reductase SDR family member FEY from Arabidopsis thaliana (Mouse-ear cress).